The primary structure comprises 1380 residues: DNA-directed RNA polymerase subunit beta (1380 aa).

Belongs to the RNA polymerase beta chain family. The RNAP catalytic core consists of 2 alpha, 1 beta, 1 beta' and 1 omega subunit. When a sigma factor is associated with the core the holoenzyme is formed, which can initiate transcription.

It catalyses the reaction RNA(n) + a ribonucleoside 5'-triphosphate = RNA(n+1) + diphosphate. Its function is as follows. DNA-dependent RNA polymerase catalyzes the transcription of DNA into RNA using the four ribonucleoside triphosphates as substrates. In Ehrlichia ruminantium (strain Welgevonden), this protein is DNA-directed RNA polymerase subunit beta.